The chain runs to 304 residues: tRNA dimethylallyltransferase (304 aa).

2 to 9 serves as a coordination point for ATP; that stretch reads GPTASGKT. 4–9 provides a ligand contact to substrate; sequence TASGKT. Interaction with substrate tRNA stretches follow at residues 27–30, 151–155, 232–237, and 265–272; these read DSAL, QRINR, RCVGYR, and KRQITWLR.

It belongs to the IPP transferase family. As to quaternary structure, monomer. Mg(2+) serves as cofactor.

The catalysed reaction is adenosine(37) in tRNA + dimethylallyl diphosphate = N(6)-dimethylallyladenosine(37) in tRNA + diphosphate. Its function is as follows. Catalyzes the transfer of a dimethylallyl group onto the adenine at position 37 in tRNAs that read codons beginning with uridine, leading to the formation of N6-(dimethylallyl)adenosine (i(6)A). This is tRNA dimethylallyltransferase from Actinobacillus pleuropneumoniae serotype 7 (strain AP76).